The sequence spans 265 residues: Mlc titration factor A (265 aa).

The Zn(2+) site is built by His-111, His-148, His-152, and Glu-211.

The protein belongs to the MtfA family. Interacts with Mlc. The cofactor is Zn(2+).

It localises to the cytoplasm. Its function is as follows. Involved in the modulation of the activity of the glucose-phosphotransferase system (glucose-PTS). Interacts with the transcriptional repressor Mlc, preventing its interaction with DNA and leading to the modulation of expression of genes regulated by Mlc, including ptsG, which encodes the PTS system glucose-specific EIICB component. In terms of biological role, shows zinc-dependent metallopeptidase activity. This chain is Mlc titration factor A, found in Escherichia coli O6:K15:H31 (strain 536 / UPEC).